We begin with the raw amino-acid sequence, 156 residues long: Small ribosomal subunit protein uS7 (156 aa).

Belongs to the universal ribosomal protein uS7 family. In terms of assembly, part of the 30S ribosomal subunit. Contacts proteins S9 and S11.

Its function is as follows. One of the primary rRNA binding proteins, it binds directly to 16S rRNA where it nucleates assembly of the head domain of the 30S subunit. Is located at the subunit interface close to the decoding center, probably blocks exit of the E-site tRNA. This chain is Small ribosomal subunit protein uS7, found in Bacillus pumilus (strain SAFR-032).